The chain runs to 397 residues: Tubby-like protein 8 (397 aa).

The segment covering 1–16 (MAGSRKVNDLLEENKG) has biased composition (basic and acidic residues). The segment at 1–46 (MAGSRKVNDLLEENKGNVDTITGSLSTQKGEDKENVSPEKVSTSVE) is disordered. The segment covering 17-28 (NVDTITGSLSTQ) has biased composition (polar residues).

The protein belongs to the TUB family. In terms of tissue distribution, mostly expressed in roots, flowers and siliques.

The chain is Tubby-like protein 8 from Arabidopsis thaliana (Mouse-ear cress).